A 245-amino-acid polypeptide reads, in one-letter code: Keratin-associated protein 10-12 (245 aa).

19 consecutive repeat copies span residues 36-40, 41-45, 62-66, 84-88, 94-98, 104-108, 109-113, 114-118, 119-123, 124-128, 131-135, 141-145, 151-155, 156-160, 161-165, 173-177, 183-187, 188-192, and 214-218. The interval 36-218 is 19 X 5 AA repeats of C-C-X(3); that stretch reads CCEPPCCAPA…VPVPSCCVPT (183 aa).

This sequence belongs to the KRTAP type 10 family. As to quaternary structure, interacts with hair keratins. As to expression, restricted to a narrow region of the hair fiber cuticle, lying approximately 20 cell layers above the apex of the dermal papilla of the hair root; not detected in any other tissues.

In the hair cortex, hair keratin intermediate filaments are embedded in an interfilamentous matrix, consisting of hair keratin-associated proteins (KRTAP), which are essential for the formation of a rigid and resistant hair shaft through their extensive disulfide bond cross-linking with abundant cysteine residues of hair keratins. The matrix proteins include the high-sulfur and high-glycine-tyrosine keratins. This is Keratin-associated protein 10-12 (KRTAP10-12) from Homo sapiens (Human).